The following is a 293-amino-acid chain: NAD kinase (293 aa).

Catalysis depends on D72, which acts as the Proton acceptor. NAD(+)-binding positions include 72-73, 146-147, R157, K174, D176, 187-192, and Q247; these read DG, ND, and TAYALS.

This sequence belongs to the NAD kinase family. Requires a divalent metal cation as cofactor.

It localises to the cytoplasm. It catalyses the reaction NAD(+) + ATP = ADP + NADP(+) + H(+). Functionally, involved in the regulation of the intracellular balance of NAD and NADP, and is a key enzyme in the biosynthesis of NADP. Catalyzes specifically the phosphorylation on 2'-hydroxyl of the adenosine moiety of NAD to yield NADP. The polypeptide is NAD kinase (Marinomonas sp. (strain MWYL1)).